Consider the following 373-residue polypeptide: Spermidine/putrescine import ATP-binding protein PotA (373 aa).

The 231-residue stretch at isoleucine 11 to isoleucine 241 folds into the ABC transporter domain. Glycine 43–threonine 50 contacts ATP.

Belongs to the ABC transporter superfamily. Spermidine/putrescine importer (TC 3.A.1.11.1) family. The complex is composed of two ATP-binding proteins (PotA), two transmembrane proteins (PotB and PotC) and a solute-binding protein (PotD).

The protein localises to the cell inner membrane. The enzyme catalyses ATP + H2O + polyamine-[polyamine-binding protein]Side 1 = ADP + phosphate + polyamineSide 2 + [polyamine-binding protein]Side 1.. Functionally, part of the ABC transporter complex PotABCD involved in spermidine/putrescine import. Responsible for energy coupling to the transport system. This Mannheimia succiniciproducens (strain KCTC 0769BP / MBEL55E) protein is Spermidine/putrescine import ATP-binding protein PotA.